The following is a 26-amino-acid chain: uncharacterized protein (26 aa).

It localises to the plastid. It is found in the chloroplast. This is an uncharacterized protein from Trieres chinensis (Marine centric diatom).